A 425-amino-acid chain; its full sequence is Serine--tRNA ligase (425 aa).

Residue 230–232 coordinates L-serine; that stretch reads TAE. ATP is bound at residue 261 to 263; it reads RQE. Glu284 contacts L-serine. 348–351 is an ATP binding site; that stretch reads EISS. Residue Ser384 participates in L-serine binding.

Belongs to the class-II aminoacyl-tRNA synthetase family. Type-1 seryl-tRNA synthetase subfamily. As to quaternary structure, homodimer. The tRNA molecule binds across the dimer.

Its subcellular location is the cytoplasm. It catalyses the reaction tRNA(Ser) + L-serine + ATP = L-seryl-tRNA(Ser) + AMP + diphosphate + H(+). The catalysed reaction is tRNA(Sec) + L-serine + ATP = L-seryl-tRNA(Sec) + AMP + diphosphate + H(+). It functions in the pathway aminoacyl-tRNA biosynthesis; selenocysteinyl-tRNA(Sec) biosynthesis; L-seryl-tRNA(Sec) from L-serine and tRNA(Sec): step 1/1. Functionally, catalyzes the attachment of serine to tRNA(Ser). Is also able to aminoacylate tRNA(Sec) with serine, to form the misacylated tRNA L-seryl-tRNA(Sec), which will be further converted into selenocysteinyl-tRNA(Sec). The sequence is that of Serine--tRNA ligase from Caldanaerobacter subterraneus subsp. tengcongensis (strain DSM 15242 / JCM 11007 / NBRC 100824 / MB4) (Thermoanaerobacter tengcongensis).